A 260-amino-acid chain; its full sequence is HTH-type transcriptional repressor NanR (260 aa).

The segment at methionine 1 to arginine 22 is disordered. The region spanning lysine 27–proline 95 is the HTH gntR-type domain. Residues glutamate 55–alanine 74 constitute a DNA-binding region (H-T-H motif).

This sequence belongs to the NanR family.

Functionally, transcriptional repressor that controls expression of the genes required for the catabolism of sialic acids. The sequence is that of HTH-type transcriptional repressor NanR from Salmonella newport (strain SL254).